The sequence spans 644 residues: Exoribonuclease 2 (644 aa).

The 328-residue stretch at R189–K516 folds into the RNB domain. In terms of domain architecture, S1 motif spans D561–V643.

It belongs to the RNR ribonuclease family. RNase II subfamily.

It is found in the cytoplasm. It catalyses the reaction Exonucleolytic cleavage in the 3'- to 5'-direction to yield nucleoside 5'-phosphates.. Functionally, involved in mRNA degradation. Hydrolyzes single-stranded polyribonucleotides processively in the 3' to 5' direction. This Escherichia coli (strain ATCC 8739 / DSM 1576 / NBRC 3972 / NCIMB 8545 / WDCM 00012 / Crooks) protein is Exoribonuclease 2.